Reading from the N-terminus, the 45-residue chain is Bomanin Short 2 (45 aa).

Residues 1–20 form the signal peptide; sequence MKFFSVVTVFVFGLLALANA. A propeptide spans 21-27 (removed by a dipeptidylpeptidase); it reads VPLSPDP. Cysteine 36 and cysteine 39 are joined by a disulfide. Glycine 43 carries the glycine amide modification.

As to expression, hemolymph (at protein level).

The protein localises to the secreted. Secreted immune-induced peptide induced by Toll signaling. Has a role in resistance to bacterial and fungal infections. This chain is Bomanin Short 2, found in Drosophila melanogaster (Fruit fly).